A 225-amino-acid polypeptide reads, in one-letter code: Transcription factor HES-7 (225 aa).

Residues 12–69 (GPKMLKPLVEKRRRDRINRSLEELRLLLLERTRDQNLRNPKLEKAEILEFAVGYLRER) enclose the bHLH domain. In terms of domain architecture, Orange spans 92–122 (YLSGFRECLLRLAAFAHDASPAARAQLFSAL). The interval 125 to 225 (YLRPKPPRPK…PPPAFWRPWP (101 aa)) is disordered. Over residues 147 to 158 (LDPAAPALGPAL) the composition is skewed to low complexity. Positions 212–225 (APLPPPPAFWRPWP) are enriched in pro residues. A WRPW motif motif is present at residues 221–224 (WRPW).

In terms of assembly, transcription repression requires formation of a complex with a corepressor protein of the Groucho/TLE family.

The protein localises to the nucleus. Functionally, transcriptional repressor. Represses transcription from both N box- and E box-containing promoters. May with HES1, cooperatively regulate somite formation in the presomitic mesoderm (PSM). May function as a segmentation clock, which is essential for coordinated somite segmentation. This Homo sapiens (Human) protein is Transcription factor HES-7 (HES7).